A 919-amino-acid polypeptide reads, in one-letter code: Isoleucine--tRNA ligase (919 aa).

The 'HIGH' region motif lies at 57 to 67 (PYANGHIHIGT). Glutamate 553 contacts L-isoleucyl-5'-AMP. The short motif at 594–598 (KMSKS) is the 'KMSKS' region element. An ATP-binding site is contributed by lysine 597. Residues cysteine 887, cysteine 890, cysteine 907, and cysteine 910 each contribute to the Zn(2+) site.

Belongs to the class-I aminoacyl-tRNA synthetase family. IleS type 1 subfamily. As to quaternary structure, monomer. Zn(2+) serves as cofactor.

Its subcellular location is the cytoplasm. It catalyses the reaction tRNA(Ile) + L-isoleucine + ATP = L-isoleucyl-tRNA(Ile) + AMP + diphosphate. Functionally, catalyzes the attachment of isoleucine to tRNA(Ile). As IleRS can inadvertently accommodate and process structurally similar amino acids such as valine, to avoid such errors it has two additional distinct tRNA(Ile)-dependent editing activities. One activity is designated as 'pretransfer' editing and involves the hydrolysis of activated Val-AMP. The other activity is designated 'posttransfer' editing and involves deacylation of mischarged Val-tRNA(Ile). This is Isoleucine--tRNA ligase from Thermotoga maritima (strain ATCC 43589 / DSM 3109 / JCM 10099 / NBRC 100826 / MSB8).